The following is a 505-amino-acid chain: Maturase K (505 aa).

This sequence belongs to the intron maturase 2 family. MatK subfamily.

It is found in the plastid. The protein localises to the chloroplast. Its function is as follows. Usually encoded in the trnK tRNA gene intron. Probably assists in splicing its own and other chloroplast group II introns. This is Maturase K from Dioon edule (Virgin's palm).